A 67-amino-acid polypeptide reads, in one-letter code: Probable tautomerase K2 (67 aa).

Proline 2 functions as the Proton acceptor; via imino nitrogen in the catalytic mechanism.

This sequence belongs to the 4-oxalocrotonate tautomerase family.

This is Probable tautomerase K2 from Dickeya dadantii (strain 3937) (Erwinia chrysanthemi (strain 3937)).